A 299-amino-acid chain; its full sequence is Putative peptidyl-prolyl cis-trans isomerase jhp_0161 (299 aa).

Residues 1 to 21 (MKKNILNLALVGALSASFLMA) form the signal peptide. The region spanning 154-253 (KQEAHARHIL…FGYHIIYLIS (100 aa)) is the PpiC domain.

The catalysed reaction is [protein]-peptidylproline (omega=180) = [protein]-peptidylproline (omega=0). This Helicobacter pylori (strain J99 / ATCC 700824) (Campylobacter pylori J99) protein is Putative peptidyl-prolyl cis-trans isomerase jhp_0161.